The primary structure comprises 72 residues: Translation initiation factor IF-1 (72 aa).

The 72-residue stretch at 1-72 (MSKEEVLEFS…TKGRITYRYK (72 aa)) folds into the S1-like domain.

The protein belongs to the IF-1 family. In terms of assembly, component of the 30S ribosomal translation pre-initiation complex which assembles on the 30S ribosome in the order IF-2 and IF-3, IF-1 and N-formylmethionyl-tRNA(fMet); mRNA recruitment can occur at any time during PIC assembly.

It localises to the cytoplasm. One of the essential components for the initiation of protein synthesis. Stabilizes the binding of IF-2 and IF-3 on the 30S subunit to which N-formylmethionyl-tRNA(fMet) subsequently binds. Helps modulate mRNA selection, yielding the 30S pre-initiation complex (PIC). Upon addition of the 50S ribosomal subunit IF-1, IF-2 and IF-3 are released leaving the mature 70S translation initiation complex. The sequence is that of Translation initiation factor IF-1 from Bartonella bacilliformis (strain ATCC 35685 / KC583 / Herrer 020/F12,63).